Consider the following 361-residue polypeptide: Zygote arrest protein 1 (361 aa).

Disordered regions lie at residues 68–129 (GPRP…PRSW) and 142–252 (GLSS…EQDK). Residues 116–128 (PRSPARAGRPPRS) are compositionally biased toward low complexity. Position 155 is a phosphothreonine (threonine 155). The segment covering 238-252 (ASRDRASPQSTEQDK) has biased composition (basic and acidic residues). The segment at 263–346 (KYGYYHCKDC…RQDLCGRCKD (84 aa)) adopts a 3CxxC-type zinc-finger fold.

Belongs to the ZAR1 family. Interacts with YBX2. In terms of processing, phosphorylation by CDK1 does not regulate formation of MARDO (mitochondria-associated ribonucleoprotein domain) membraneless compartment. Ubiquitinated and degradaded by the proteasome during oocyte meiotic maturation, leading to MARDO (mitochondria-associated ribonucleoprotein domain) membraneless compartment dissolution.

The protein resides in the cytoplasm. The protein localises to the cytoplasmic ribonucleoprotein granule. Its function is as follows. mRNA-binding protein that mediates formation of MARDO (mitochondria-associated ribonucleoprotein domain), a membraneless compartment that stores maternal mRNAs in oocytes. MARDO assembly around mitochondria is directed by an increase in mitochondrial membrane potential during oocyte growth. Promotes formation of MARDO phase-separated membraneless compartment by undergoing liquid-liquid phase separation upon binding to maternal mRNAs. Binds to the 3'-UTR of maternal mRNAs. Maternal mRNAs stored in the MARDO are translationally repressed. Essential for female fertility and oocyte-to-embryo transition by coordinating maternal mRNA storage, translation and degradation. This is Zygote arrest protein 1 from Rattus norvegicus (Rat).